A 110-amino-acid chain; its full sequence is UPF0060 membrane protein Rpic_4131 (110 aa).

A run of 4 helical transmembrane segments spans residues 8–28, 33–53, 65–85, and 88–108; these read VLFA…WLVL, PFWL…LLTL, YGGV…GVAL, and WDVG…LQPQ.

Belongs to the UPF0060 family.

Its subcellular location is the cell inner membrane. This is UPF0060 membrane protein Rpic_4131 from Ralstonia pickettii (strain 12J).